The chain runs to 835 residues: MKVLALRHSVAQVYADTQIYTHDETKDDYENAFLISNLTTHNILYLNYSVKTLQILNKSGIAAVEIQKMDELFTLIRCNFTYDYIEDIVYLHDYSYYTNNEIRTDQHWVTKTNIEDYLLPGWKLTYVGYNGSDTRGHYNFSFKCQNAATDDDAIIEYIYSNELDFQNFILKKIKERMTTSLPIARLSNRVFRDKLFKTLVSDHSKVVNVGPRNESMFTFLDHPSIKQFSNGPYLVKDTIKLKQERWLGKRLSQFDIGQYKNMLNVLTTLYQYYDMYHEKPIIYMIGSAPSYWIYDVKQYSNLKFETWDPLDTPYSDLHHKELFYISDVTKLKDNSILYVDIRTDRENMDWKTWRKIVEEQTINNLNIAYRYLSTGKAKVCCVKMTAMDLELPISAKLLHHPTTEIRSEFYLIMDIWDSKNIKRFIPKGVLYSYINNVITENVFIQQPFKLKTLRNEYVVALYALSNDFNNREDVIKLVNNQKNALITVRINNTFKDEPKVGFKDIYDWTFLPTDFETNESIITSYDGCLGMFGLSISLASKPTGNNHLFILSGTNKYFKLDQFANHMSISRRSHQIRFSESATSYSGYIFRDLSNNNFNLIGTNVENSVSGHVYNALIYYRYNYSFDLKRWIYLHSTNKASIEGGRYYEHAPIELIYACRSAREFARLQDDLTVLRYSNEIENYINKVYSITYADDPNYFIGIKFKNIPYEYDVKVPHLTFGVLNISNSMVPDVVAILKKFKSELFRMDVTTSYTYMLSDEIYVANVSGVLSTYFKLYNAFYKEQITFGQSRMFIPHITLSFSDKKVVRIDSTRLNIDFIYLRKIKGDTVFDMAE.

Positions 171–245 (KKIKERMTTS…KDTIKLKQER (75 aa)) are N7-methyltransferase activity. A 2'-O-methyltransferase activity region spans residues 246 to 428 (WLGKRLSQFD…KNIKRFIPKG (183 aa)). The interval 429-555 (VLYSYINNVI…NHLFILSGTN (127 aa)) is N7-methyltransferase activity. Positions 556-692 (KYFKLDQFAN…NYINKVYSIT (137 aa)) are GTase/RTPase activity. The 2'-5'-phosphodiesterase activity stretch occupies residues 693–835 (YADDPNYFIG…KGDTVFDMAE (143 aa)). Active-site for 2'-5'-phosphodiesterase activity residues include His718, Thr720, His797, and Thr799.

This sequence belongs to the rotavirus VP3 family. As to quaternary structure, interacts with VP1. Interacts with VP2.

Its subcellular location is the virion. It carries out the reaction a 5'-end diphospho-ribonucleoside in mRNA + GTP + H(+) = a 5'-end (5'-triphosphoguanosine)-ribonucleoside in mRNA + diphosphate. The catalysed reaction is a 5'-end (5'-triphosphoguanosine)-ribonucleoside in mRNA + S-adenosyl-L-methionine = a 5'-end (N(7)-methyl 5'-triphosphoguanosine)-ribonucleoside in mRNA + S-adenosyl-L-homocysteine. It catalyses the reaction 5'-triphosphoadenylyl-(2'-&gt;5')-adenylyl-(2'-&gt;5')-adenosine + 2 H2O = 2 AMP + ATP + 2 H(+). In terms of biological role, multifunctional enzyme involved in mRNA capping. Catalyzes the formation of the 5' cap structure on the viral plus-strand transcripts. Specifically binds to GTP and displays guanylyltransferase and methyltransferase activities. Has affinity for ssRNA but not for dsRNA. Capping activity is non-specific and caps RNAs that initiate with either a G or an A residue. Together with VP1 polymerase, forms a VP1-VP3 complex positioned near the channels situated at each of the five-fold vertices of the core. Following infection, the outermost layer of the virus is lost, leaving a double-layered particle (DLP) made up of the core and VP6 shell. VP1 then catalyzes the transcription of fully conservative plus-strand genomic RNAs that are capped by VP3 and extruded through the DLP's channels into the cytoplasm where they function as mRNAs for translation of viral proteins. DLPs probably have an RNA triphosphatase activity as well, whereas open cores do not. Its function is as follows. Counteracts the host innate immune response thanks to its phosphodiesterase that degrades the 5'-triphosphorylated, 2'-5' linked adenylate oligomers produced by the host cell IFN-inducible 2',5'-oligoadenylate synthetase (OAS). The host RNaseL is therefore not activated. In Homo sapiens (Human), this protein is Protein VP3.